The primary structure comprises 59 residues: Large ribosomal subunit protein uL30 (59 aa).

The protein belongs to the universal ribosomal protein uL30 family. In terms of assembly, part of the 50S ribosomal subunit.

This is Large ribosomal subunit protein uL30 from Alkaliphilus oremlandii (strain OhILAs) (Clostridium oremlandii (strain OhILAs)).